Reading from the N-terminus, the 340-residue chain is Eukaryotic translation initiation factor 3 subunit I (340 aa).

5 WD repeats span residues 8 to 47, 50 to 91, 150 to 189, 194 to 233, and 291 to 330; these read GHER…RLGT, GHQG…KVWD, CTES…QLEN, EFDH…ILKT, and GHFG…FDFM.

Belongs to the eIF-3 subunit I family. As to quaternary structure, component of the eukaryotic translation initiation factor 3 (eIF-3) complex.

It is found in the cytoplasm. Functionally, component of the eukaryotic translation initiation factor 3 (eIF-3) complex, which is involved in protein synthesis of a specialized repertoire of mRNAs and, together with other initiation factors, stimulates binding of mRNA and methionyl-tRNAi to the 40S ribosome. The eIF-3 complex specifically targets and initiates translation of a subset of mRNAs involved in cell proliferation. The polypeptide is Eukaryotic translation initiation factor 3 subunit I (tif34) (Neosartorya fischeri (strain ATCC 1020 / DSM 3700 / CBS 544.65 / FGSC A1164 / JCM 1740 / NRRL 181 / WB 181) (Aspergillus fischerianus)).